We begin with the raw amino-acid sequence, 480 residues long: Ribosomal RNA small subunit methyltransferase F (480 aa).

S-adenosyl-L-methionine is bound by residues 126-132, E150, D177, and D195; that span reads AAAPGSK. C248 functions as the Nucleophile in the catalytic mechanism.

Belongs to the class I-like SAM-binding methyltransferase superfamily. RsmB/NOP family.

The protein localises to the cytoplasm. It carries out the reaction cytidine(1407) in 16S rRNA + S-adenosyl-L-methionine = 5-methylcytidine(1407) in 16S rRNA + S-adenosyl-L-homocysteine + H(+). In terms of biological role, specifically methylates the cytosine at position 1407 (m5C1407) of 16S rRNA. The protein is Ribosomal RNA small subunit methyltransferase F of Cronobacter sakazakii (strain ATCC BAA-894) (Enterobacter sakazakii).